The sequence spans 25 residues: Small ribosomal subunit protein eS32 (25 aa).

Residues 1-25 (MRAKWRKKRMRRLKRKRRKMRARSK) form a disordered region.

The protein belongs to the eukaryotic ribosomal protein eS32 family. In terms of assembly, component of the small ribosomal subunit.

In Spodoptera frugiperda (Fall armyworm), this protein is Small ribosomal subunit protein eS32 (RpL41).